The following is a 943-amino-acid chain: Receptor-like kinase TMK3 (943 aa).

A signal peptide spans 1 to 24; that stretch reads MSNSHLGTLCFIISLLGLANFSLS. At 25–482 the chain is on the extracellular side; the sequence is QTGLDDSTMQ…ETSKKSSNVK (458 aa). The N-linked (GlcNAc...) asparagine glycan is linked to Asn41. A disulfide bridge connects residues Cys54 and Cys61. LRR repeat units follow at residues 64–88, 89–111, 112–134, 136–160, 162–183, 186–210, 212–232, 233–254, 255–279, and 281–301; these read SNRV…LQSL, SELV…LSGL, SRLQ…LFSG, SSLQ…VKEA, SLQN…FFGS, LPSL…FAGT, IQSL…LGNM, TSLV…DLSG, LVSL…LVSL, and SLTT…LFGK. Asn165 and Asn170 each carry an N-linked (GlcNAc...) asparagine glycan. Residues Asn223 and Asn231 are each glycosylated (N-linked (GlcNAc...) asparagine). A glycan (N-linked (GlcNAc...) asparagine) is linked at Asn286. Intrachain disulfides connect Cys315-Cys323 and Cys353-Cys361. 3 LRR repeats span residues 363–386, 387–410, and 411–438; these read GGNI…SLAK, LTSL…ELTT, and LSKL…VTLV. Asn365 carries N-linked (GlcNAc...) asparagine glycosylation. The interval 441–476 is disordered; sequence GNANMGKNGPNKTSDAPGASPGSKPSGGSDGSETSK. A glycan (N-linked (GlcNAc...) asparagine) is linked at Asn451. Low complexity predominate over residues 454–467; that stretch reads SDAPGASPGSKPSG. A helical membrane pass occupies residues 483 to 503; sequence IIVPVVGGVVGALCLVGLGVC. The Cytoplasmic portion of the chain corresponds to 504–943; that stretch reads LYAKKRKRPA…ADSFTSVDGR (440 aa). The disordered stretch occupies residues 514–534; that stretch reads RVQSPSSNMVIHPHHSGDNDD. Residues 585–866 enclose the Protein kinase domain; the sequence is FSEENILGRG…AHIVNVLSSL (282 aa). Residues 591-599 and Lys613 contribute to the ATP site; that span reads LGRGGFGTV. Asp714 (proton acceptor) is an active-site residue. Residues 904–943 form a disordered region; it reads QTADDSGSSSSAYGSKDNTQTSIPTRPSGFADSFTSVDGR. The span at 906 to 918 shows a compositional bias: low complexity; sequence ADDSGSSSSAYGS. Residues 919–928 show a composition bias toward polar residues; that stretch reads KDNTQTSIPT.

Belongs to the protein kinase superfamily. Ser/Thr protein kinase family. As to expression, expressed in roots, leaves, stems, siliques and flowers.

It localises to the membrane. It carries out the reaction L-seryl-[protein] + ATP = O-phospho-L-seryl-[protein] + ADP + H(+). It catalyses the reaction L-threonyl-[protein] + ATP = O-phospho-L-threonyl-[protein] + ADP + H(+). Involved in auxin signal transduction and cell expansion and proliferation regulation. The polypeptide is Receptor-like kinase TMK3 (Arabidopsis thaliana (Mouse-ear cress)).